A 55-amino-acid polypeptide reads, in one-letter code: Cicadin (55 aa).

The span at 1 to 26 (NEYHGFVDKANNENKRKKQQGRDDFV) shows a compositional bias: basic and acidic residues. Positions 1–39 (NEYHGFVDKANNENKRKKQQGRDDFVVKPNNFANRRRKD) are disordered.

Possesses antifungal activity against B.cinerea, M.arachidicola, F.oxysporum, R.solani and C.comatus. Functionally, suppresses the activity of HIV-1 reverse transcriptase and stimulates the proliferation of murine splenocytes. The sequence is that of Cicadin from Cicada flammata.